Consider the following 108-residue polypeptide: Acid stress chaperone HdeB (108 aa).

The signal sequence occupies residues 1-29 (MNISSLRKAFIFMGAVAALSLVNAQSALA). An N6-acetyllysine modification is found at lysine 93.

It belongs to the HdeB family.

It is found in the periplasm. Required for optimal acid stress protection, which is important for survival of enteric bacteria in the acidic environment of the host stomach. Exhibits a chaperone-like activity at acidic pH by preventing the aggregation of many different periplasmic proteins. The chain is Acid stress chaperone HdeB from Escherichia coli O6:H1 (strain CFT073 / ATCC 700928 / UPEC).